We begin with the raw amino-acid sequence, 227 residues long: NAD(P)H-quinone oxidoreductase subunit K, chloroplastic (227 aa).

[4Fe-4S] cluster is bound by residues Cys-43, Cys-44, Cys-108, and Cys-139.

It belongs to the complex I 20 kDa subunit family. As to quaternary structure, NDH is composed of at least 16 different subunits, 5 of which are encoded in the nucleus. The cofactor is [4Fe-4S] cluster.

The protein resides in the plastid. The protein localises to the chloroplast thylakoid membrane. The catalysed reaction is a plastoquinone + NADH + (n+1) H(+)(in) = a plastoquinol + NAD(+) + n H(+)(out). It catalyses the reaction a plastoquinone + NADPH + (n+1) H(+)(in) = a plastoquinol + NADP(+) + n H(+)(out). Its function is as follows. NDH shuttles electrons from NAD(P)H:plastoquinone, via FMN and iron-sulfur (Fe-S) centers, to quinones in the photosynthetic chain and possibly in a chloroplast respiratory chain. The immediate electron acceptor for the enzyme in this species is believed to be plastoquinone. Couples the redox reaction to proton translocation, and thus conserves the redox energy in a proton gradient. This Ranunculus macranthus (Large buttercup) protein is NAD(P)H-quinone oxidoreductase subunit K, chloroplastic.